The chain runs to 190 residues: dCTP deaminase, dUMP-forming (190 aa).

DCTP contacts are provided by residues 101 to 106, Asp119, 127 to 129, Gln148, Tyr162, and Gln174; these read KSSLGR and TLE. Glu129 functions as the Proton donor/acceptor in the catalytic mechanism. Residues 163–190 are disordered; that stretch reads GSTRVGSKYQGQRGPTPSRSYQNFITST. Residues 171-190 show a composition bias toward polar residues; the sequence is YQGQRGPTPSRSYQNFITST.

It belongs to the dCTP deaminase family. As to quaternary structure, homotrimer.

It catalyses the reaction dCTP + 2 H2O = dUMP + NH4(+) + diphosphate. The protein operates within pyrimidine metabolism; dUMP biosynthesis; dUMP from dCTP: step 1/1. Functionally, bifunctional enzyme that catalyzes both the deamination of dCTP to dUTP and the hydrolysis of dUTP to dUMP without releasing the toxic dUTP intermediate. The chain is dCTP deaminase, dUMP-forming from Mycobacterium avium (strain 104).